A 155-amino-acid polypeptide reads, in one-letter code: Probable Brix domain-containing ribosomal biogenesis protein (155 aa).

The Brix domain maps to 1–155; sequence MLLTTSRKPS…LLIRDFRVGE (155 aa).

Functionally, probably involved in the biogenesis of the ribosome. This chain is Probable Brix domain-containing ribosomal biogenesis protein, found in Methanothermobacter thermautotrophicus (strain ATCC 29096 / DSM 1053 / JCM 10044 / NBRC 100330 / Delta H) (Methanobacterium thermoautotrophicum).